Consider the following 954-residue polypeptide: Bifunctional glutamine synthetase adenylyltransferase/adenylyl-removing enzyme (954 aa).

The adenylyl removase stretch occupies residues 1 to 452; it reads MAVQKDSNKS…HFKATVGGEE (452 aa). The adenylyl transferase stretch occupies residues 458 to 954; the sequence is EHWTAQLWNV…ILAIYQAILE (497 aa).

Belongs to the GlnE family. It depends on Mg(2+) as a cofactor.

The catalysed reaction is [glutamine synthetase]-O(4)-(5'-adenylyl)-L-tyrosine + phosphate = [glutamine synthetase]-L-tyrosine + ADP. The enzyme catalyses [glutamine synthetase]-L-tyrosine + ATP = [glutamine synthetase]-O(4)-(5'-adenylyl)-L-tyrosine + diphosphate. In terms of biological role, involved in the regulation of glutamine synthetase GlnA, a key enzyme in the process to assimilate ammonia. When cellular nitrogen levels are high, the C-terminal adenylyl transferase (AT) inactivates GlnA by covalent transfer of an adenylyl group from ATP to specific tyrosine residue of GlnA, thus reducing its activity. Conversely, when nitrogen levels are low, the N-terminal adenylyl removase (AR) activates GlnA by removing the adenylyl group by phosphorolysis, increasing its activity. The regulatory region of GlnE binds the signal transduction protein PII (GlnB) which indicates the nitrogen status of the cell. This Shewanella oneidensis (strain ATCC 700550 / JCM 31522 / CIP 106686 / LMG 19005 / NCIMB 14063 / MR-1) protein is Bifunctional glutamine synthetase adenylyltransferase/adenylyl-removing enzyme.